The following is a 126-amino-acid chain: Protein ApaG (126 aa).

The region spanning 2–126 (SALDDSIRVE…FRLALPGLLH (125 aa)) is the ApaG domain.

This Shewanella sp. (strain ANA-3) protein is Protein ApaG.